A 298-amino-acid polypeptide reads, in one-letter code: Replication protein A 32 kDa subunit B (298 aa).

Positions 89-163 form a DNA-binding region, OB; that stretch reads VRLVGRMLNK…QVVAYSVRRI (75 aa).

Belongs to the replication factor A protein 2 family. As to quaternary structure, heterotrimer of RPA1, RPA2 and RPA3 (canonical replication protein A complex). Interacts with RPA1A and RPA3. Phosphorylated in a cell-cycle-dependent manner (from the S phase until mitosis). In response to DNA damage, recruited to DNA-repair nuclear foci, as a hypophosphorylated form.

The protein localises to the nucleus. Functionally, component of the replication protein A complex (RPA) required for DNA recombination, repair and replication. The activity of RPA is mediated by single-stranded DNA binding and protein interactions. This is Replication protein A 32 kDa subunit B (RPA2B) from Oryza sativa subsp. japonica (Rice).